Reading from the N-terminus, the 137-residue chain is Large ribosomal subunit protein uL16 (137 aa).

The protein belongs to the universal ribosomal protein uL16 family. In terms of assembly, part of the 50S ribosomal subunit.

Binds 23S rRNA and is also seen to make contacts with the A and possibly P site tRNAs. The protein is Large ribosomal subunit protein uL16 of Xanthomonas campestris pv. campestris (strain 8004).